Consider the following 115-residue polypeptide: Histidine-rich carboxyl terminus protein 1 (115 aa).

The helical transmembrane segment at 9-29 (ALVGWITGAAVAVLLLLLLLA) threads the bilayer. Residues 86–115 (GLHHHHHPRHTPHHLHHHHHPHRHHPRHAR) are disordered. A compositionally biased stretch (basic residues) spans 87-115 (LHHHHHPRHTPHHLHHHHHPHRHHPRHAR).

Its subcellular location is the membrane. In Homo sapiens (Human), this protein is Histidine-rich carboxyl terminus protein 1 (HRCT1).